Here is a 142-residue protein sequence, read N- to C-terminus: Large ribosomal subunit protein uL13 (142 aa).

Belongs to the universal ribosomal protein uL13 family. As to quaternary structure, part of the 50S ribosomal subunit.

Functionally, this protein is one of the early assembly proteins of the 50S ribosomal subunit, although it is not seen to bind rRNA by itself. It is important during the early stages of 50S assembly. The sequence is that of Large ribosomal subunit protein uL13 from Dechloromonas aromatica (strain RCB).